Consider the following 377-residue polypeptide: Nitric oxide reductase FlRd-NAD(+) reductase (377 aa).

This sequence belongs to the FAD-dependent oxidoreductase family. It depends on FAD as a cofactor.

The protein localises to the cytoplasm. The catalysed reaction is 2 reduced [nitric oxide reductase rubredoxin domain] + NAD(+) + H(+) = 2 oxidized [nitric oxide reductase rubredoxin domain] + NADH. The protein operates within nitrogen metabolism; nitric oxide reduction. Its function is as follows. One of at least two accessory proteins for anaerobic nitric oxide (NO) reductase. Reduces the rubredoxin moiety of NO reductase. The sequence is that of Nitric oxide reductase FlRd-NAD(+) reductase from Escherichia coli O17:K52:H18 (strain UMN026 / ExPEC).